Reading from the N-terminus, the 555-residue chain is Inorganic phosphate transporter 1-11 (555 aa).

The Cytoplasmic segment spans residues 1-28 (MADADGGSNLAVLDALDSARTQMYHMKA). A helical membrane pass occupies residues 29–49 (IVIAGMGFFTDAYDLFCISTV). At 50 to 77 (SKLLGRLYYQPDGSTDSKPGALSKTANN) the chain is on the extracellular side. The helical transmembrane segment at 78–98 (MVIGVALVGTLMGQLVFGYFG) threads the bilayer. The Cytoplasmic segment spans residues 99 to 105 (DKLGRKR). The helical transmembrane segment at 106 to 126 (VYGVTLILMAACAIGSGLSFG) threads the bilayer. Residues 127-130 (SSRK) are Extracellular-facing. Residues 131–151 (AVIGTLCFFRFWLGFGIGGDY) form a helical membrane-spanning segment. Residues 152–167 (PLSATIMSEYSNKKTR) lie on the Cytoplasmic side of the membrane. The helical transmembrane segment at 168 to 188 (GAFIAAVFAMQGVGIIFAGLV) threads the bilayer. Residues 189 to 216 (SMIVSSIFLTYNKAPSYKGNHDLSRQMP) lie on the Extracellular side of the membrane. The helical transmembrane segment at 217-237 (AADYVWRIVLMIGAFPALATF) threads the bilayer. At 238-298 (YWRMKMPETA…PLLSMEFARR (61 aa)) the chain is on the cytoplasmic side. A helical membrane pass occupies residues 299–319 (HGLHLIGTTTTWFLLDIAFYS). The Extracellular portion of the chain corresponds to 320–351 (QNLTQKDIFPAMGLISGAAEVNALTEMFQISK). Residues 352 to 372 (ASFLVALLGTFPGYWVTVALI) traverse the membrane as a helical segment. The Cytoplasmic portion of the chain corresponds to 373 to 377 (DKMGR). The helical transmembrane segment at 378 to 398 (YMIQLIGFFMMSMFMLAMGIL) threads the bilayer. Residues 399–408 (YDYLKTHHFL) lie on the Extracellular side of the membrane. Residues 409 to 436 (FGLLYALTFFFANFGPNSTTFVLPAELF) traverse the membrane as a helical segment. Residues 437 to 442 (PTRVRS) lie on the Cytoplasmic side of the membrane. Residues 443 to 463 (TCHAISAAAGKAGAIVAAFGI) form a helical membrane-spanning segment. Residues 464-477 (QKLTYNSQVKSIKK) lie on the Extracellular side of the membrane. Residues 478-498 (ALIILSITNMLGFFFTFLVPE) traverse the membrane as a helical segment. The Cytoplasmic portion of the chain corresponds to 499-555 (TMGRSLEEISGEDGNTGAGGGGAPAAANAGVGVSASDVSRDEKFPASSTEWQTSMHA). Positions 506–555 (EISGEDGNTGAGGGGAPAAANAGVGVSASDVSRDEKFPASSTEWQTSMHA) are disordered. Gly residues predominate over residues 512–521 (GNTGAGGGGA). Residues 522-535 (PAAANAGVGVSASD) are compositionally biased toward low complexity. The span at 544 to 555 (ASSTEWQTSMHA) shows a compositional bias: polar residues.

It belongs to the major facilitator superfamily. Phosphate:H(+) symporter (TC 2.A.1.9) family.

The protein localises to the membrane. Functionally, symbiosis-specific regulated inorganic phosphate (Pi) transporter. Probably involved in symbiosis-mediated Pi uptake in roots colonized by myccorhizal fungi. The chain is Inorganic phosphate transporter 1-11 (PHT1-11) from Oryza sativa subsp. japonica (Rice).